The chain runs to 311 residues: Aspartate carbamoyltransferase catalytic subunit (311 aa).

2 residues coordinate carbamoyl phosphate: R55 and T56. An L-aspartate-binding site is contributed by K85. Carbamoyl phosphate-binding residues include R106, H134, and Q137. Positions 167 and 228 each coordinate L-aspartate. Residues L266 and P267 each contribute to the carbamoyl phosphate site.

This sequence belongs to the aspartate/ornithine carbamoyltransferase superfamily. ATCase family. Heterododecamer (2C3:3R2) of six catalytic PyrB chains organized as two trimers (C3), and six regulatory PyrI chains organized as three dimers (R2).

It catalyses the reaction carbamoyl phosphate + L-aspartate = N-carbamoyl-L-aspartate + phosphate + H(+). It functions in the pathway pyrimidine metabolism; UMP biosynthesis via de novo pathway; (S)-dihydroorotate from bicarbonate: step 2/3. Catalyzes the condensation of carbamoyl phosphate and aspartate to form carbamoyl aspartate and inorganic phosphate, the committed step in the de novo pyrimidine nucleotide biosynthesis pathway. In Psychromonas ingrahamii (strain DSM 17664 / CCUG 51855 / 37), this protein is Aspartate carbamoyltransferase catalytic subunit.